A 301-amino-acid chain; its full sequence is Envoplakin-like protein (301 aa).

Residues 1–88 (MQASADQVER…ERVTQECAEY (88 aa)) adopt a coiled-coil conformation. Disordered regions lie at residues 18–41 (RLQQ…TGSS) and 118–166 (GLRR…PEPI). A compositionally biased stretch (polar residues) spans 26 to 41 (SEQSQALQHQQETGSS). Positions 136 to 151 (GAQHRAEGDQRPRRAA) are enriched in basic and acidic residues.

It belongs to the plakin or cytolinker family.

The polypeptide is Envoplakin-like protein (EVPLL) (Homo sapiens (Human)).